Reading from the N-terminus, the 107-residue chain is MSGSQLWAAVVVLLLLQSAQGVYIKYHGFQVQLESVKKLSELEEKQMSSPQLRKSGLLLPDVCHNPALPLDLQPICASQEAASTFKALRTIATDECELCINVACTGC.

Positions 1–21 (MSGSQLWAAVVVLLLLQSAQG) are cleaved as a signal peptide. The propeptide occupies 22–92 (VYIKYHGFQV…STFKALRTIA (71 aa)). 3 cysteine pairs are disulfide-bonded: C63–C76, C96–C104, and C99–C107.

This sequence belongs to the guanylin family.

The protein resides in the secreted. In terms of biological role, endogenous activator of intestinal guanylate cyclase. It stimulates this enzyme through the same receptor binding region as the heat-stable enterotoxins. May be a potent physiological regulator of intestinal fluid and electrolyte transport. May be an autocrine/paracrine regulator of intestinal salt and water transport. This chain is Guanylate cyclase activator 2B (GUCA2B), found in Notomys alexis (Spinifex hopping mouse).